The following is a 111-amino-acid chain: Universal stress protein B (111 aa).

A helical transmembrane segment spans residues 1–21 (MISTVSLFWALCVVCIVNMAR). The Cytoplasmic segment spans residues 22–89 (YFSSLRALLV…IRRCERVRRQ (68 aa)). The helical transmembrane segment at 90 to 110 (FLLTSALCGLVVVSLIALMIW) threads the bilayer. A topological domain (periplasmic) is located at residue histidine 111.

Belongs to the universal stress protein B family.

The protein localises to the cell inner membrane. This chain is Universal stress protein B (uspB), found in Salmonella choleraesuis (strain SC-B67).